The chain runs to 709 residues: Leucine-rich repeat-containing protein 4B (709 aa).

The N-terminal stretch at 1–38 (MAQAHIRGSPCPLLPPGRMSWPHGALLLLWLFSPPLRA) is a signal peptide. An LRRNT domain is found at 50–88 (GGGSPPATSCPAACSCSNQASRVICTRRELAEVPASIPV). 9 LRR repeats span residues 89–110 (NTRY…TFKH), 113–134 (HLEI…AFNG), 137–158 (SLNT…AFEY), 161–182 (KLRE…AFNR), 185–207 (SLRR…AFEG), 210–231 (NLRY…TALV), 232–253 (RLEE…SFQG), 256–277 (SLRK…AFDD), and 280–301 (SLEE…LFTP). Residue N226 is glycosylated (N-linked (GlcNAc...) asparagine). N285, N335, N376, N402, N424, N427, N446, and N454 each carry an N-linked (GlcNAc...) asparagine glycan. Residues 313–365 (NPWHCNCDVLWLSWWLKETVPSNTTCCARCHAPAGLKGRYIGELDQSHFTCYA) enclose the LRRCT domain. The 89-residue stretch at 366-454 (PVIVEPPTDL…GNTTASATLN (89 aa)) folds into the Ig-like C2-type domain. The cysteines at positions 387 and 438 are disulfide-linked. Residues 496–552 (TQPGEEAQQPRGTEKEPPGPTTDGAWGGGRPDAAAPASASTTAPAPRSSRPTEKAFT) form a disordered region. Residues 528–544 (AAAPASASTTAPAPRSS) show a composition bias toward low complexity. The helical transmembrane segment at 575–595 (IIIGCFVAITFMAAVMLVAFY) threads the bilayer. S689 is subject to Phosphoserine.

In terms of assembly, interacts with PTPRF. Interacts with DLG4. N-glycosylated. O-glycosylated; contains sialic acid.

Its subcellular location is the membrane. The protein resides in the presynaptic cell membrane. Its function is as follows. Synaptic adhesion protein. Regulates the formation of excitatory synapses. The trans-synaptic adhesion between LRRC4B and PTPRF regulates the formation of excitatory synapses in a bidirectional manner. The chain is Leucine-rich repeat-containing protein 4B (Lrrc4b) from Mus musculus (Mouse).